A 1374-amino-acid polypeptide reads, in one-letter code: Y' element ATP-dependent helicase YLL067C (1374 aa).

Residues 321–345 (AGEAASSDHDQKISRVTRKRPREPK) are disordered. Residues 375–552 (EIYMADTPSV…LQRIGLTGLA (178 aa)) enclose the Helicase ATP-binding domain. Residue 388–395 (APPGYGKT) participates in ATP binding. A DEAH box motif is present at residues 498–501 (DEFH). The Helicase C-terminal domain occupies 609-758 (KLLLALFEIE…EFYGLESKKG (150 aa)). The span at 832–1011 (ANASTNATTN…ATTTESTNAS (180 aa)) shows a compositional bias: low complexity. The tract at residues 832-1035 (ANASTNATTN…RFHPVTDINK (204 aa)) is disordered. The span at 1012 to 1035 (AKEDANKDGNAEDNRFHPVTDINK) shows a compositional bias: basic and acidic residues.

The protein belongs to the helicase family. Yeast subtelomeric Y' repeat subfamily.

Catalyzes DNA unwinding and is involved in telomerase-independent telomere maintenance. The sequence is that of Y' element ATP-dependent helicase YLL067C from Saccharomyces cerevisiae (strain ATCC 204508 / S288c) (Baker's yeast).